A 250-amino-acid polypeptide reads, in one-letter code: MMSYSLRVADLPAGDRPREKLLSQGARYLSSAELLAILLGTGQGAGKLSAVGLGQFILKQLGERTGDSTDAVSALRDITPEELMAIPGVGPAKATTILAAVELGKRVFQSRPGEQTIIDSPALAAAVLAADLMWQATERFAVLLLDVRHRLLGSHVITVGTATETLAHPREIFREAVRRNASRLIIAHNHPSGNLSPSQADLDLTKQILQAGQLMEIPVLDHLILGNGDYQSLREITPLWQQVPQGDGSA.

One can recognise an MPN domain in the interval 116-239 (TIIDSPALAA…YQSLREITPL (124 aa)). The Zn(2+) site is built by His188, His190, and Asp201. Residues 188-201 (HNHPSGNLSPSQAD) carry the JAMM motif motif.

Belongs to the UPF0758 family.

The polypeptide is UPF0758 protein tlr1707 (Thermosynechococcus vestitus (strain NIES-2133 / IAM M-273 / BP-1)).